Here is a 206-residue protein sequence, read N- to C-terminus: MKIVIASSHGYKIRETKTFLKQLGSFDIFSLTDFPNYYAPKEVGSLPEENALAKGLHAARELNSWVIADDTMLMVPALNGLPGKLSATFAGEDACDKDHRKKLLQEMQSLESIVDRSAYFECCIVLASPEGKFFKTRGICEGYISHQEKGSSGFGYDSLFLKYDYKQTFAELSEDIKNQVSHRAKALQKLAPYLQDLLEKQLVSRN.

7–12 (SSHGYK) is a binding site for substrate. The active-site Proton acceptor is the D70. A Mg(2+)-binding site is contributed by D70. Substrate contacts are provided by residues T71, 154-157 (FGYD), K177, and 182-183 (HR).

Belongs to the HAM1 NTPase family. In terms of assembly, homodimer. Mg(2+) serves as cofactor.

The catalysed reaction is XTP + H2O = XMP + diphosphate + H(+). It carries out the reaction dITP + H2O = dIMP + diphosphate + H(+). The enzyme catalyses ITP + H2O = IMP + diphosphate + H(+). In terms of biological role, pyrophosphatase that catalyzes the hydrolysis of nucleoside triphosphates to their monophosphate derivatives, with a high preference for the non-canonical purine nucleotides XTP (xanthosine triphosphate), dITP (deoxyinosine triphosphate) and ITP. Seems to function as a house-cleaning enzyme that removes non-canonical purine nucleotides from the nucleotide pool, thus preventing their incorporation into DNA/RNA and avoiding chromosomal lesions. This is dITP/XTP pyrophosphatase from Chlamydia abortus (strain DSM 27085 / S26/3) (Chlamydophila abortus).